A 276-amino-acid polypeptide reads, in one-letter code: Melibiose/raffinose/stachyose import permease protein MelC (276 aa).

6 helical membrane passes run 11 to 31, 74 to 94, 104 to 124, 139 to 159, 186 to 206, and 240 to 260; these read IITL…YILL, IITG…AYPL, AVFA…MVPL, IAIF…YSGF, IVFP…CVFI, and LHLV…LFLA. Positions 69 to 261 constitute an ABC transmembrane type-1 domain; it reads FINTMIITGF…LPMVVLFLAL (193 aa).

It belongs to the binding-protein-dependent transport system permease family. As to quaternary structure, the complex is composed of two ATP-binding proteins (MsmX), two transmembrane proteins (MelC and MelD) and a solute-binding protein (MelE).

It localises to the cell membrane. Functionally, part of the ABC transporter complex MelEDC-MsmX involved in melibiose, raffinose and stachyose import. Probably responsible for the translocation of the substrate across the membrane. In Bacillus subtilis (strain 168), this protein is Melibiose/raffinose/stachyose import permease protein MelC.